A 1975-amino-acid chain; its full sequence is Golgi-specific brefeldin A-resistance guanine nucleotide exchange factor 1 homolog (1975 aa).

Disordered stretches follow at residues 216 to 243 (NPTE…EPEN) and 299 to 352 (ISAG…EEKM). The segment covering 221–230 (RQKRKKKRQL) has biased composition (basic residues). The SEC7 domain occupies 624 to 812 (QIIEQKKRKR…ADMYQAIKTE (189 aa)). The segment covering 1264 to 1277 (QSLRVGGDQQQQRM) has biased composition (polar residues). Disordered stretches follow at residues 1264 to 1318 (QSLR…DLES), 1447 to 1473 (DEKA…VTED), 1699 to 1751 (IKDT…ATAQ), 1788 to 1854 (VHSG…QYAY), and 1877 to 1975 (YANQ…QEKP). Basic and acidic residues predominate over residues 1291–1309 (GAHEERAYTSEGEERRRGG). The span at 1451–1464 (VKKHHHHHHGHKKK) shows a compositional bias: basic residues. A compositionally biased stretch (low complexity) spans 1734 to 1751 (SNSTAATSTSDPSIATAQ). Over residues 1797–1808 (GSPPQTEPPASS) the composition is skewed to pro residues. Low complexity-rich tracts occupy residues 1820 to 1854 (YEQY…QYAY) and 1877 to 1894 (YANQ…QQQH). Positions 1895-1909 (PVNPTSPSVHGQYSV) are enriched in polar residues. The segment covering 1938–1957 (TPPQNNAPALAPSAPTTTSA) has biased composition (low complexity).

The protein resides in the golgi apparatus. It is found in the cis-Golgi network. The protein localises to the endoplasmic reticulum-Golgi intermediate compartment. In terms of biological role, guanine-nucleotide exchange factor (GEF) for members of the Arf family of small GTPases involved in trafficking in the early secretory pathway; its GEF activity initiates the coating of nascent vesicles via the localized generation of activated ARFs through replacement of GDP with GTP. Also, plays a role in receptor-mediated endocytosis in oocytes and endosomal trafficking. Involved in vesicle retrograde transport from the ERGIC and cis-Golgi compartments to the endoplasmic reticulum (ER). Plays a role in maintaining mitochondrial morphology, network organization and function. May be required for the basolateral cell membrane localization of the serine threonine protein kinase sgk-1 in intestinal cells. In Caenorhabditis elegans, this protein is Golgi-specific brefeldin A-resistance guanine nucleotide exchange factor 1 homolog.